Reading from the N-terminus, the 384-residue chain is Geranylgeranyl pyrophosphate synthase (384 aa).

Disordered stretches follow at residues 1–25 (MVPNANSNTVSLQSPNAIPPRTSST) and 39–78 (RPVPESDWLGQNNTRNRSSSTTAIPLTGMHATGPQDPARY). Polar residues predominate over residues 47–62 (LGQNNTRNRSSSTTAI). The isopentenyl diphosphate site is built by Lys112, Arg115, and His144. Positions 151 and 155 each coordinate Mg(2+). Arg160 provides a ligand contact to dimethylallyl diphosphate. Arg161 contacts isopentenyl diphosphate. Dimethylallyl diphosphate is bound by residues Lys238, Thr239, and Gln272. Mg(2+) is bound at residue Asp275. Residues Asn279, Lys289, and Lys299 each contribute to the dimethylallyl diphosphate site.

Belongs to the FPP/GGPP synthase family. It depends on Mg(2+) as a cofactor.

The catalysed reaction is isopentenyl diphosphate + dimethylallyl diphosphate = (2E)-geranyl diphosphate + diphosphate. It catalyses the reaction isopentenyl diphosphate + (2E)-geranyl diphosphate = (2E,6E)-farnesyl diphosphate + diphosphate. The enzyme catalyses isopentenyl diphosphate + (2E,6E)-farnesyl diphosphate = (2E,6E,10E)-geranylgeranyl diphosphate + diphosphate. It functions in the pathway secondary metabolite biosynthesis. Functionally, catalyzes the trans-addition of the 3 molecules of isopentenyl diphosphate (IPP) onto dimethylallyl diphosphate (DMAPP) to form geranylgeranyl pyrophosphate (GGPP). GGPP is a precursor for the biosynthesis of many secondary metabolites, including the indole diterpenes nodulisporic acids (NA). The protein is Geranylgeranyl pyrophosphate synthase of Hypoxylon pulicicidum.